Reading from the N-terminus, the 1770-residue chain is Transposon Ty2-F Gag-Pol polyprotein (1770 aa).

3 stretches are compositionally biased toward polar residues: residues 1–11 (MESQQLHQNPH), 19–39 (ASVT…SASN), and 49–60 (KVNSQQETTPGT). Disordered regions lie at residues 1-86 (MESQ…GQYQ) and 359-453 (QHSE…LPDH). Residues 295–397 (ENNINVSDRL…SSKPRAAKAH (103 aa)) are RNA-binding. Positions 369 to 381 (TSPNTTNTKVTTR) are enriched in low complexity. Composition is skewed to polar residues over residues 399-408 (IATSSKFSRV) and 415-435 (ESTV…GQQQ). The active-site For protease activity; shared with dimeric partner is the aspartate 457. Positions 579 to 636 (NVNKSKSVNKYPYPLIHRMLGHANFRSIQKSLKKNAVTYLKESDIEWSNASTYQCPDC) are integrase-type zinc finger-like. The 176-residue stretch at 656 to 831 (ESYEPFQYLH…AGLDITTILP (176 aa)) folds into the Integrase catalytic domain. Residues aspartate 667 and aspartate 732 each coordinate Mg(2+). Disordered regions lie at residues 1004–1034 (MGGT…STNE), 1059–1135 (TEEP…KSSK), 1146–1165 (LPLP…VSKD), and 1170–1205 (HSRQ…TEIE). 2 stretches are compositionally biased toward polar residues: residues 1009 to 1034 (ESDT…STNE) and 1065 to 1082 (QRNS…STPS). Residues 1151–1165 (LTHKSPTDTSDVSKD) show a composition bias toward basic and acidic residues. The short motif at 1193 to 1227 (KKRSLEDNETEIEVSRDTWNNKNMRSLEPPRSKKR) is the Bipartite nuclear localization signal element. In terms of domain architecture, Reverse transcriptase Ty1/copia-type spans 1353 to 1491 (NDYYITQLDI…DILGLEIKYQ (139 aa)). Mg(2+) is bound by residues aspartate 1361, aspartate 1442, aspartate 1443, aspartate 1625, glutamate 1667, and aspartate 1700. The RNase H Ty1/copia-type domain maps to 1625 to 1767 (DASYGNQPYY…IKTFKLLTNK (143 aa)).

In terms of assembly, the capsid protein forms a homotrimer, from which the VLPs are assembled. The protease is a homodimer, whose active site consists of two apposed aspartic acid residues. In terms of processing, initially, virus-like particles (VLPs) are composed of the structural unprocessed proteins Gag and Gag-Pol, and also contain the host initiator methionine tRNA (tRNA(i)-Met) which serves as a primer for minus-strand DNA synthesis, and a dimer of genomic Ty RNA. Processing of the polyproteins occurs within the particle and proceeds by an ordered pathway, called maturation. First, the protease (PR) is released by autocatalytic cleavage of the Gag-Pol polyprotein, and this cleavage is a prerequisite for subsequent processing at the remaining sites to release the mature structural and catalytic proteins. Maturation takes place prior to the RT reaction and is required to produce transposition-competent VLPs.

The protein resides in the cytoplasm. It is found in the nucleus. It catalyses the reaction DNA(n) + a 2'-deoxyribonucleoside 5'-triphosphate = DNA(n+1) + diphosphate. It carries out the reaction Endonucleolytic cleavage to 5'-phosphomonoester.. Its function is as follows. Capsid protein (CA) is the structural component of the virus-like particle (VLP), forming the shell that encapsulates the retrotransposons dimeric RNA genome. The particles are assembled from trimer-clustered units and there are holes in the capsid shells that allow for the diffusion of macromolecules. CA also has nucleocapsid-like chaperone activity, promoting primer tRNA(i)-Met annealing to the multipartite primer-binding site (PBS), dimerization of Ty2 RNA and initiation of reverse transcription. Functionally, the aspartyl protease (PR) mediates the proteolytic cleavages of the Gag and Gag-Pol polyproteins after assembly of the VLP. Reverse transcriptase/ribonuclease H (RT) is a multifunctional enzyme that catalyzes the conversion of the retro-elements RNA genome into dsDNA within the VLP. The enzyme displays a DNA polymerase activity that can copy either DNA or RNA templates, and a ribonuclease H (RNase H) activity that cleaves the RNA strand of RNA-DNA heteroduplexes during plus-strand synthesis and hydrolyzes RNA primers. The conversion leads to a linear dsDNA copy of the retrotransposon that includes long terminal repeats (LTRs) at both ends. In terms of biological role, integrase (IN) targets the VLP to the nucleus, where a subparticle preintegration complex (PIC) containing at least integrase and the newly synthesized dsDNA copy of the retrotransposon must transit the nuclear membrane. Once in the nucleus, integrase performs the integration of the dsDNA into the host genome. The chain is Transposon Ty2-F Gag-Pol polyprotein (TY2B-F) from Saccharomyces cerevisiae (strain ATCC 204508 / S288c) (Baker's yeast).